Consider the following 106-residue polypeptide: A-type ATP synthase subunit F (106 aa).

The protein belongs to the V-ATPase F subunit family. In terms of assembly, has multiple subunits with at least A(3), B(3), C, D, E, F, H, I and proteolipid K(x).

It localises to the cell membrane. In terms of biological role, component of the A-type ATP synthase that produces ATP from ADP in the presence of a proton gradient across the membrane. The protein is A-type ATP synthase subunit F of Methanosphaera stadtmanae (strain ATCC 43021 / DSM 3091 / JCM 11832 / MCB-3).